The following is a 349-amino-acid chain: Phosphoribosylformylglycinamidine cyclo-ligase (349 aa).

It belongs to the AIR synthase family.

The protein resides in the cytoplasm. The enzyme catalyses 2-formamido-N(1)-(5-O-phospho-beta-D-ribosyl)acetamidine + ATP = 5-amino-1-(5-phospho-beta-D-ribosyl)imidazole + ADP + phosphate + H(+). It participates in purine metabolism; IMP biosynthesis via de novo pathway; 5-amino-1-(5-phospho-D-ribosyl)imidazole from N(2)-formyl-N(1)-(5-phospho-D-ribosyl)glycinamide: step 2/2. The sequence is that of Phosphoribosylformylglycinamidine cyclo-ligase from Lactobacillus helveticus (strain DPC 4571).